We begin with the raw amino-acid sequence, 582 residues long: ATP-dependent lipid A-core flippase (582 aa).

5 consecutive transmembrane segments (helical) span residues 16 to 36 (LWPT…ALIL), 63 to 83 (VLVW…ITSY), 153 to 173 (IIGL…ILIV), 253 to 273 (PIIQ…ASFP), and 275 to 295 (VMDS…IALM). The 283-residue stretch at 28–310 (IVAGVALILN…LTNVNAQFQR (283 aa)) folds into the ABC transmembrane type-1 domain. The ABC transporter domain occupies 342–578 (VEFRNVTFTY…RGVYAQLHKM (237 aa)). Position 376-383 (376-383 (GRSGSGKS)) interacts with ATP.

This sequence belongs to the ABC transporter superfamily. Lipid exporter (TC 3.A.1.106) family. As to quaternary structure, homodimer.

The protein localises to the cell inner membrane. The catalysed reaction is ATP + H2O + lipid A-core oligosaccharideSide 1 = ADP + phosphate + lipid A-core oligosaccharideSide 2.. Its function is as follows. Involved in lipopolysaccharide (LPS) biosynthesis. Translocates lipid A-core from the inner to the outer leaflet of the inner membrane. Transmembrane domains (TMD) form a pore in the inner membrane and the ATP-binding domain (NBD) is responsible for energy generation. This is ATP-dependent lipid A-core flippase from Escherichia coli O157:H7.